The following is a 179-amino-acid chain: Large ribosomal subunit protein uL5 (179 aa).

This sequence belongs to the universal ribosomal protein uL5 family. As to quaternary structure, part of the 50S ribosomal subunit; part of the 5S rRNA/L5/L18/L25 subcomplex. Contacts the 5S rRNA and the P site tRNA. Forms a bridge to the 30S subunit in the 70S ribosome.

Functionally, this is one of the proteins that bind and probably mediate the attachment of the 5S RNA into the large ribosomal subunit, where it forms part of the central protuberance. In the 70S ribosome it contacts protein S13 of the 30S subunit (bridge B1b), connecting the 2 subunits; this bridge is implicated in subunit movement. Contacts the P site tRNA; the 5S rRNA and some of its associated proteins might help stabilize positioning of ribosome-bound tRNAs. This Klebsiella pneumoniae (strain 342) protein is Large ribosomal subunit protein uL5.